We begin with the raw amino-acid sequence, 128 residues long: Large ribosomal subunit protein bL17 (128 aa).

This sequence belongs to the bacterial ribosomal protein bL17 family. In terms of assembly, part of the 50S ribosomal subunit. Contacts protein L32.

The polypeptide is Large ribosomal subunit protein bL17 (Pseudomonas fluorescens (strain Pf0-1)).